A 201-amino-acid polypeptide reads, in one-letter code: dITP/XTP pyrophosphatase (201 aa).

9–14 (TRNSGK) provides a ligand contact to substrate. Mg(2+) contacts are provided by Glu42 and Asp71. The active-site Proton acceptor is the Asp71. Substrate contacts are provided by residues Ser72, 156-159 (FGYD), Lys178, and 183-184 (HR).

This sequence belongs to the HAM1 NTPase family. Homodimer. Mg(2+) is required as a cofactor.

It carries out the reaction XTP + H2O = XMP + diphosphate + H(+). The enzyme catalyses dITP + H2O = dIMP + diphosphate + H(+). The catalysed reaction is ITP + H2O = IMP + diphosphate + H(+). Pyrophosphatase that catalyzes the hydrolysis of nucleoside triphosphates to their monophosphate derivatives, with a high preference for the non-canonical purine nucleotides XTP (xanthosine triphosphate), dITP (deoxyinosine triphosphate) and ITP. Seems to function as a house-cleaning enzyme that removes non-canonical purine nucleotides from the nucleotide pool, thus preventing their incorporation into DNA/RNA and avoiding chromosomal lesions. This chain is dITP/XTP pyrophosphatase (ynbD), found in Lactococcus lactis subsp. lactis (strain IL1403) (Streptococcus lactis).